Here is a 177-residue protein sequence, read N- to C-terminus: Interleukin-1 receptor antagonist protein (177 aa).

The N-terminal stretch at 1–25 is a signal peptide; it reads MEICRGLRSHLITLLLFLFHSETIC. C91 and C141 are oxidised to a cystine. N-linked (GlcNAc...) asparagine glycosylation is present at N109.

Belongs to the IL-1 family. As to expression, the intracellular form of IL1RN is predominantly expressed in epithelial cells.

The protein resides in the secreted. It localises to the cytoplasm. Anti-inflammatory antagonist of interleukin-1 family of proinflammatory cytokines such as interleukin-1beta/IL1B and interleukin-1alpha/IL1A. Protects from immune dysregulation and uncontrolled systemic inflammation triggered by IL1 for a range of innate stimulatory agents such as pathogens. This is Interleukin-1 receptor antagonist protein (IL1RN) from Homo sapiens (Human).